The sequence spans 484 residues: Xylulose kinase (484 aa).

77 to 78 (MH) is a substrate binding site. The Proton acceptor role is filled by D233.

The protein belongs to the FGGY kinase family. Homodimer.

It catalyses the reaction D-xylulose + ATP = D-xylulose 5-phosphate + ADP + H(+). It carries out the reaction 1-deoxy-D-xylulose + ATP = 1-deoxy-D-xylulose 5-phosphate + ADP + H(+). Sugar binding is accompanied by a dramatic hinge-bending movement that enhances interactions with Mg-ATP. Functionally, catalyzes the phosphorylation of D-xylulose to D-xylulose 5-phosphate. Also catalyzes the phosphorylation of 1-deoxy-D-xylulose to 1-deoxy-D-xylulose 5-phosphate, with lower efficiency. Can also use D-ribulose, xylitol and D-arabitol, but D-xylulose is preferred over the other substrates. Has a weak substrate-independent Mg-ATP-hydrolyzing activity. The chain is Xylulose kinase from Escherichia coli (strain K12).